We begin with the raw amino-acid sequence, 224 residues long: UPF0758 protein BPUM_2444 (224 aa).

The 123-residue stretch at 102-224 (VIRTPEDGAN…FVSLKEKGYL (123 aa)) folds into the MPN domain. Residues His173, His175, and Asp186 each contribute to the Zn(2+) site. Positions 173-186 (HNHPSGDPTPSRED) match the JAMM motif motif.

It belongs to the UPF0758 family.

This is UPF0758 protein BPUM_2444 from Bacillus pumilus (strain SAFR-032).